The following is a 606-amino-acid chain: NADH-ubiquinone oxidoreductase chain 5 (606 aa).

The next 16 helical transmembrane spans lie at 4 to 24 (FSSLTLVTLILLTMPIAAINF), 43 to 63 (AFITSMIPTMMFIHTGQEMII), 84 to 104 (FFSMMFVPVALFVTWSIMEFS), 114 to 134 (INQFFKYLLLFLITMLILVTA), 140 to 160 (LFIGWEGVGIMSFLLIGWWYG), 171 to 191 (AILYNRIGDIGFILAMAWFLI), 213 to 233 (LMGLILAATGKSAQFGLHPWL), 241 to 261 (TPVSALLHSSTMVVAGIFLLI), 272 to 292 (FGQSIMLCLGAMTTLFTAMCA), 301 to 320 (IIAFSTSSQLGLMMVTIGIN), 325 to 347 (AFLHICTHAFFKAMLFMCSGSII), 366 to 386 (MPFTTTALIIGSLALTGMPFL), 413 to 433 (LVATSFTAIYSTRIIFFALLG), 457 to 477 (LLIGSLFAGFIISNNIPPMTI), 485 to 505 (YLKMTALTVTILGFILALEIS), and 582 to 602 (GLIKLYFLSFLITILISTTLL).

Belongs to the complex I subunit 5 family. In terms of assembly, core subunit of respiratory chain NADH dehydrogenase (Complex I) which is composed of 45 different subunits.

It is found in the mitochondrion inner membrane. The enzyme catalyses a ubiquinone + NADH + 5 H(+)(in) = a ubiquinol + NAD(+) + 4 H(+)(out). Functionally, core subunit of the mitochondrial membrane respiratory chain NADH dehydrogenase (Complex I) which catalyzes electron transfer from NADH through the respiratory chain, using ubiquinone as an electron acceptor. Essential for the catalytic activity and assembly of complex I. This Ovis aries (Sheep) protein is NADH-ubiquinone oxidoreductase chain 5 (MT-ND5).